The chain runs to 30 residues: Cliotide T20 (30 aa).

Residues 1-30 (GSAIRCGESCLLGKCYTPGCTCDRPICKKN) constitute a cross-link (cyclopeptide (Gly-Asn)). 3 disulfide bridges follow: Cys-6/Cys-20, Cys-10/Cys-22, and Cys-15/Cys-27.

In terms of processing, contains 3 disulfide bonds. This is a cyclic peptide. Expressed in root nodules but not in seed.

Functionally, probably participates in a plant defense mechanism. Active against Gram-negative bacterium E.coli ATCC 700926 (MIC=0.5 uM) under low-salt conditions. Not active against Gram-positive bacterium S.aureus ATCC 12600 up to a concentration of 100 uM under low-salt conditions. Exhibits immunomodulatory activity but no cytotoxicity in vitro. This is Cliotide T20 from Clitoria ternatea (Butterfly pea).